Here is a 332-residue protein sequence, read N- to C-terminus: UPF0194 membrane protein YbhG (332 aa).

The N-terminal stretch at 1-16 is a signal peptide; sequence MMKKPVVIGLAVVVLA. A coiled-coil region spans residues 108-209; it reads EEIAQAAAAV…LNLQDSTLIA (102 aa).

It belongs to the UPF0194 family.

It localises to the periplasm. The polypeptide is UPF0194 membrane protein YbhG (Escherichia coli O127:H6 (strain E2348/69 / EPEC)).